The following is a 637-amino-acid chain: Threonine--tRNA ligase (637 aa).

A TGS domain is found at 1 to 61; that stretch reads MIKISLKNGK…NKDCKVEILT (61 aa). Residues 242–532 form a catalytic region; the sequence is DHRKLGKELD…LIEHYAGAFP (291 aa). Residues Cys-333, His-384, and His-509 each contribute to the Zn(2+) site.

This sequence belongs to the class-II aminoacyl-tRNA synthetase family. In terms of assembly, homodimer. The cofactor is Zn(2+).

The protein resides in the cytoplasm. The enzyme catalyses tRNA(Thr) + L-threonine + ATP = L-threonyl-tRNA(Thr) + AMP + diphosphate + H(+). Catalyzes the attachment of threonine to tRNA(Thr) in a two-step reaction: L-threonine is first activated by ATP to form Thr-AMP and then transferred to the acceptor end of tRNA(Thr). Also edits incorrectly charged L-seryl-tRNA(Thr). The chain is Threonine--tRNA ligase from Clostridium kluyveri (strain NBRC 12016).